A 1078-amino-acid polypeptide reads, in one-letter code: Teashirt homolog 1-A (1078 aa).

Disordered stretches follow at residues 1–110 (MPRR…NVSY), 140–197 (KSNE…SNSA), and 271–300 (GHYRDDNKDRDAERTKRWSKPRKRSLMEME). Residues 26 to 36 (IEEDNLEDDGL) are compositionally biased toward acidic residues. The span at 57–71 (PSYQNSPISSATNQD) shows a compositional bias: polar residues. Positions 143–197 (ENSSPTTNTNKSSMSEATGSTSDPDTPTTIPSSSCTNTSTSISVTTSNSTNSNSA) are enriched in low complexity. 2 C2H2-type zinc fingers span residues 248–272 (FKCKDCSAAYDTLVELTVHMNETGH) and 309–333 (LKCMYCGHSFESLQDLSVHMIKTKH). Positions 271–286 (GHYRDDNKDRDAERTK) are enriched in basic and acidic residues. Positions 365-394 (DSPEQAGISPGASVSESAKDPKAANPYVTP) are disordered. The C2H2-type 3 zinc-finger motif lies at 418 to 442 (LKCMECGSSHDSLQQLTAHMMVTGH). Disordered regions lie at residues 472-524 (LPPT…ENED) and 850-877 (RLTPKSSTPSTVSEKSDADGSSFEEAMD). Basic and acidic residues predominate over residues 497–524 (HSEEKKDPEKEKVNNCEVEKRIKEENED). Over residues 853–862 (PKSSTPSTVS) the composition is skewed to polar residues. The homeobox DNA-binding region spans 885–955 (RKGRQSNWNP…NVKYQLRRTG (71 aa)). 2 consecutive C2H2-type zinc fingers follow at residues 970–992 (FFCNDCASQFRTASTYIGHLETH) and 1038–1061 (FQCKLCNRTFASKHAVKLHLSKTH).

The protein belongs to the teashirt C2H2-type zinc-finger protein family.

It localises to the nucleus. Its function is as follows. Probable transcriptional regulator involved in developmental processes. May act as a transcriptional repressor (Potential). Involved in two major neuronal regionalization processes: primary anteroposterior (AP) axis patterning of the CNS and segmentation of the cranial neuronal crest (CNS) development. The polypeptide is Teashirt homolog 1-A (tshz1-a) (Xenopus laevis (African clawed frog)).